A 483-amino-acid chain; its full sequence is Aspartyl/glutamyl-tRNA(Asn/Gln) amidotransferase subunit B (483 aa).

Belongs to the GatB/GatE family. GatB subfamily. As to quaternary structure, heterotrimer of A, B and C subunits.

The catalysed reaction is L-glutamyl-tRNA(Gln) + L-glutamine + ATP + H2O = L-glutaminyl-tRNA(Gln) + L-glutamate + ADP + phosphate + H(+). It catalyses the reaction L-aspartyl-tRNA(Asn) + L-glutamine + ATP + H2O = L-asparaginyl-tRNA(Asn) + L-glutamate + ADP + phosphate + 2 H(+). Functionally, allows the formation of correctly charged Asn-tRNA(Asn) or Gln-tRNA(Gln) through the transamidation of misacylated Asp-tRNA(Asn) or Glu-tRNA(Gln) in organisms which lack either or both of asparaginyl-tRNA or glutaminyl-tRNA synthetases. The reaction takes place in the presence of glutamine and ATP through an activated phospho-Asp-tRNA(Asn) or phospho-Glu-tRNA(Gln). The protein is Aspartyl/glutamyl-tRNA(Asn/Gln) amidotransferase subunit B of Thermomicrobium roseum (strain ATCC 27502 / DSM 5159 / P-2).